A 229-amino-acid chain; its full sequence is RNA chaperone ProQ (229 aa).

Residues 105–178 are disordered; sequence EAKARVQAQR…PREEKHTPVS (74 aa). Residues 117–136 show a composition bias toward basic and acidic residues; the sequence is QQAKKREAAAAAGDKESAPR. A compositionally biased stretch (basic residues) spans 137–146; sequence RERKPRPAAP. Positions 147-176 are enriched in basic and acidic residues; sequence RRKEGAERKPRAEKPAAKAPRAPREEKHTP.

Belongs to the ProQ family.

The protein resides in the cytoplasm. Functionally, RNA chaperone with significant RNA binding, RNA strand exchange and RNA duplexing activities. May regulate ProP activity through an RNA-based, post-transcriptional mechanism. The polypeptide is RNA chaperone ProQ (Escherichia fergusonii (strain ATCC 35469 / DSM 13698 / CCUG 18766 / IAM 14443 / JCM 21226 / LMG 7866 / NBRC 102419 / NCTC 12128 / CDC 0568-73)).